The sequence spans 926 residues: Mating-type protein A-alpha Y3 (926 aa).

The homeobox DNA-binding region spans 147–206 (YKKPRPKFHSEYTPLLELYFHFNAYPTFADRRMLAEKTGMQTRQITVWFQNHRRRAKGPL). Disordered stretches follow at residues 238–281 (SHLR…KVGK), 308–374 (QQAP…TSSA), 424–452 (GKGK…SRLN), and 625–734 (RARK…MNES). Basic and acidic residues-rich tracts occupy residues 267 to 281 (KKPD…KVGK) and 326 to 338 (NAQD…ATKS). The span at 428–441 (PSQNLTSTPATFST) shows a compositional bias: polar residues. Basic and acidic residues predominate over residues 632–660 (KQAEKEARKEEKRARKEAKQAKKDRKEQR). Composition is skewed to low complexity over residues 669 to 687 (STLD…SATS) and 699 to 724 (SSAS…SGTS).

It localises to the nucleus. Its function is as follows. Specifies A-alpha-3 mating-type. May regulate the expression of genes specific to the homokaryotic cell type. The sequence is that of Mating-type protein A-alpha Y3 from Schizophyllum commune (Split gill fungus).